The following is a 109-amino-acid chain: Nucleoid-associated protein HI_0442 (109 aa).

The protein belongs to the YbaB/EbfC family. Homodimer.

It is found in the cytoplasm. The protein localises to the nucleoid. In terms of biological role, binds to DNA and alters its conformation. May be involved in regulation of gene expression, nucleoid organization and DNA protection. This chain is Nucleoid-associated protein HI_0442, found in Haemophilus influenzae (strain ATCC 51907 / DSM 11121 / KW20 / Rd).